Consider the following 88-residue polypeptide: MKIIPLADRVLVKTDKSETKTASGIIIPDTAQEKMQSGTVIAVGSDSEKIKVSVGQRVMHDKYAGNPVKIDGEEHLLLKGADILAVIE.

This sequence belongs to the GroES chaperonin family. In terms of assembly, heptamer of 7 subunits arranged in a ring. Interacts with the chaperonin GroEL.

Its subcellular location is the cytoplasm. Its function is as follows. Together with the chaperonin GroEL, plays an essential role in assisting protein folding. The GroEL-GroES system forms a nano-cage that allows encapsulation of the non-native substrate proteins and provides a physical environment optimized to promote and accelerate protein folding. GroES binds to the apical surface of the GroEL ring, thereby capping the opening of the GroEL channel. The protein is Co-chaperonin GroES of Treponema pallidum (strain Nichols).